The primary structure comprises 355 residues: uncharacterized protein (355 aa).

Residues 1 to 22 (MRLTHVTACICLLVAVAVLFSG) form the signal peptide.

This sequence belongs to the bacterial solute-binding protein 1 family. WtpA subfamily.

This is an uncharacterized protein from Methanoculleus marisnigri (strain ATCC 35101 / DSM 1498 / JR1).